Here is a 159-residue protein sequence, read N- to C-terminus: Disulfide bond formation protein B (159 aa).

The Cytoplasmic segment spans residues 1–8 (MQANSRAF). Residues 9–25 (FLLIAVIAFGLVGYALY) traverse the membrane as a helical segment. At 26 to 43 (LQHVEGLQPCPLCVLQRF) the chain is on the periplasmic side. The cysteines at positions 35 and 38 are disulfide-linked. A helical membrane pass occupies residues 44 to 57 (AFVGIGVFSLLAAL). Residues 58 to 63 (SSATRL) lie on the Cytoplasmic side of the membrane. A helical transmembrane segment spans residues 64-81 (LWHGLGMLSGLGGIFVAG). Over 82 to 136 (YHVSLLLNPKASCGIDPIENWVNALPTAKWLPQVFESDGLCTAPLPPVLGVSIPL) the chain is Periplasmic. A disulfide bridge connects residues cysteine 94 and cysteine 122. Residues 137-155 (WSLIWMVILALTLVVAMIR) traverse the membrane as a helical segment. Over 156–159 (RERR) the chain is Cytoplasmic.

Belongs to the DsbB family.

It localises to the cell inner membrane. Required for disulfide bond formation in some periplasmic proteins. Acts by oxidizing the DsbA protein. This chain is Disulfide bond formation protein B, found in Ralstonia nicotianae (strain ATCC BAA-1114 / GMI1000) (Ralstonia solanacearum).